Consider the following 432-residue polypeptide: Gamma-glutamyl phosphate reductase (432 aa).

The protein belongs to the gamma-glutamyl phosphate reductase family.

It is found in the cytoplasm. It catalyses the reaction L-glutamate 5-semialdehyde + phosphate + NADP(+) = L-glutamyl 5-phosphate + NADPH + H(+). It functions in the pathway amino-acid biosynthesis; L-proline biosynthesis; L-glutamate 5-semialdehyde from L-glutamate: step 2/2. Functionally, catalyzes the NADPH-dependent reduction of L-glutamate 5-phosphate into L-glutamate 5-semialdehyde and phosphate. The product spontaneously undergoes cyclization to form 1-pyrroline-5-carboxylate. This Deinococcus radiodurans (strain ATCC 13939 / DSM 20539 / JCM 16871 / CCUG 27074 / LMG 4051 / NBRC 15346 / NCIMB 9279 / VKM B-1422 / R1) protein is Gamma-glutamyl phosphate reductase.